The primary structure comprises 341 residues: Inactive caspase-12 (341 aa).

The CARD domain occupies 1–92; sequence MADEKPSNGV…QLSSDISSDG (92 aa). Residues Ser85 and Ser90 each carry the phosphoserine modification. Catalysis depends on residues His172 and Cys220.

It belongs to the peptidase C14A family. In terms of tissue distribution, widely expressed, with highest levels in lung.

May function as a negative regulator of inflammatory responses and innate immunity. May reduce cytokine release in response to bacterial lipopolysaccharide during infection. Reduces activation of NF-kappa-B in response to TNF. May lack protease activity. In Homo sapiens (Human), this protein is Inactive caspase-12 (CASP12).